The primary structure comprises 331 residues: Autoinducer 2 import system permease protein LsrC (331 aa).

9 consecutive transmembrane segments (helical) span residues 14–34, 39–59, 70–90, 93–113, 115–135, 157–177, 206–226, 252–272, and 284–304; these read LIAI…YFSL, LVFS…LVML, IAGL…NLPV, LLTL…VTWL, IPAI…MLLL, LNIS…AWIL, IQII…IVFA, GISL…AFFL, and LPAW…LIFD.

This sequence belongs to the binding-protein-dependent transport system permease family. AraH/RbsC subfamily. The complex is composed of two ATP-binding proteins (LsrA), two transmembrane proteins (LsrC and LsrD) and a solute-binding protein (LsrB).

It localises to the cell inner membrane. Part of the ABC transporter complex LsrABCD involved in autoinducer 2 (AI-2) import. Probably responsible for the translocation of the substrate across the membrane. The sequence is that of Autoinducer 2 import system permease protein LsrC (lsrC) from Photorhabdus luminescens (Xenorhabdus luminescens).